The chain runs to 194 residues: FMN-dependent NADH:quinone oxidoreductase (194 aa).

FMN is bound by residues S9, 15–17, and 85–88; these read SIS and MYNF.

Belongs to the azoreductase type 1 family. Homodimer. It depends on FMN as a cofactor.

The catalysed reaction is 2 a quinone + NADH + H(+) = 2 a 1,4-benzosemiquinone + NAD(+). It carries out the reaction N,N-dimethyl-1,4-phenylenediamine + anthranilate + 2 NAD(+) = 2-(4-dimethylaminophenyl)diazenylbenzoate + 2 NADH + 2 H(+). Functionally, quinone reductase that provides resistance to thiol-specific stress caused by electrophilic quinones. Also exhibits azoreductase activity. Catalyzes the reductive cleavage of the azo bond in aromatic azo compounds to the corresponding amines. The sequence is that of FMN-dependent NADH:quinone oxidoreductase from Xanthomonas oryzae pv. oryzae (strain MAFF 311018).